Consider the following 345-residue polypeptide: Tyrosine-binding protein (345 aa).

The N-terminal stretch at 1–23 (MIKSKKILSLIIAGVLGVSMLTG) is a signal peptide. A lipid anchor (N-palmitoyl cysteine) is attached at C24. Residue C24 is the site of S-diacylglycerol cysteine attachment.

The complex is probably composed of two ATP-binding proteins (CDR20291_0806), two transmembrane proteins (CDR20291_0807) and a solute-binding protein (CDR20291_0805).

Its subcellular location is the cell membrane. Its function is as follows. Probably part of an ABC transporter complex involved in tyrosine uptake. May also import phenylalanine. The polypeptide is Tyrosine-binding protein (Clostridioides difficile (strain R20291) (Peptoclostridium difficile)).